A 76-amino-acid polypeptide reads, in one-letter code: Small ribosomal subunit protein bS18 (76 aa).

Belongs to the bacterial ribosomal protein bS18 family. In terms of assembly, part of the 30S ribosomal subunit. Forms a tight heterodimer with protein bS6.

Functionally, binds as a heterodimer with protein bS6 to the central domain of the 16S rRNA, where it helps stabilize the platform of the 30S subunit. The polypeptide is Small ribosomal subunit protein bS18 (Azotobacter vinelandii (strain DJ / ATCC BAA-1303)).